The sequence spans 203 residues: MSRYTGPKWRISRRLGVSLSGTGKELSRRAYAPGDHGAGRRAKISEYGMQLREKQKLRFTYGLTERQFKALFNKAGKIRKGTHGTNFMISLEQRLDSVVYRLGLATTRQQARQLVNHGHILVDGKRVDIPSYSVQPGQVVSVREKSKNILPIQAAIESVVARPQFVSLDTEKLEGSLVRLPEREELDADINEALIVEYYNHLG.

The S4 RNA-binding domain occupies 93–153 (QRLDSVVYRL…EKSKNILPIQ (61 aa)).

The protein belongs to the universal ribosomal protein uS4 family. In terms of assembly, part of the 30S ribosomal subunit. Contacts protein S5. The interaction surface between S4 and S5 is involved in control of translational fidelity.

Its function is as follows. One of the primary rRNA binding proteins, it binds directly to 16S rRNA where it nucleates assembly of the body of the 30S subunit. Functionally, with S5 and S12 plays an important role in translational accuracy. The chain is Small ribosomal subunit protein uS4 from Leuconostoc mesenteroides subsp. mesenteroides (strain ATCC 8293 / DSM 20343 / BCRC 11652 / CCM 1803 / JCM 6124 / NCDO 523 / NBRC 100496 / NCIMB 8023 / NCTC 12954 / NRRL B-1118 / 37Y).